Consider the following 233-residue polypeptide: Achaete-scute homolog 1 (233 aa).

2 disordered regions span residues 1–24 and 39–95; these read MESS…FLPP and AAAA…ELMR. Residues 39–62 show a composition bias toward low complexity; that stretch reads AAAAAAQSAQQQQQQQAPQQQAPQ. The span at 78–87 shows a compositional bias: basic residues; it reads SAAKQVKRQR. One can recognise a bHLH domain in the interval 115 to 167; sequence AAVARRNERERNRVKLVNLGFATLREHVPNGAANKKMSKVETLRSAVEYIRAL. Lys-153 carries the N6-acetyllysine modification.

As to quaternary structure, efficient DNA binding requires dimerization with another bHLH protein. Forms a heterodimer with TCF3. In terms of tissue distribution, developing CNS and PNS at embryonic and postnatal stages.

The protein resides in the nucleus. Its function is as follows. Transcription factor that plays a key role in neuronal differentiation: acts as a pioneer transcription factor, accessing closed chromatin to allow other factors to bind and activate neural pathways. Directly binds the E box motif (5'-CANNTG-3') on promoters and promotes transcription of neuronal genes. The combination of three transcription factors, ASCL1, POU3F2/BRN2 and MYT1L, is sufficient to reprogram fibroblasts and other somatic cells into induced neuronal (iN) cells in vitro. Plays a role at early stages of development of specific neural lineages in most regions of the CNS, and of several lineages in the PNS. Essential for the generation of olfactory and autonomic neurons. Acts synergistically with FOXN4 to specify the identity of V2b neurons rather than V2a from bipotential p2 progenitors during spinal cord neurogenesis, probably through DLL4-NOTCH signaling activation. Involved in the regulation of neuroendocrine cell development in the glandular stomach. The polypeptide is Achaete-scute homolog 1 (Ascl1) (Rattus norvegicus (Rat)).